The primary structure comprises 37 residues: Cytochrome b6-f complex subunit 5 (37 aa).

Residues 5-25 form a helical membrane-spanning segment; sequence LLSGIVLGLVPITITGLLVTA.

This sequence belongs to the PetG family. As to quaternary structure, the 4 large subunits of the cytochrome b6-f complex are cytochrome b6, subunit IV (17 kDa polypeptide, PetD), cytochrome f and the Rieske protein, while the 4 small subunits are PetG, PetL, PetM and PetN. The complex functions as a dimer.

The protein localises to the plastid. It localises to the chloroplast thylakoid membrane. Component of the cytochrome b6-f complex, which mediates electron transfer between photosystem II (PSII) and photosystem I (PSI), cyclic electron flow around PSI, and state transitions. PetG is required for either the stability or assembly of the cytochrome b6-f complex. This is Cytochrome b6-f complex subunit 5 from Tupiella akineta (Green alga).